The chain runs to 344 residues: S-adenosylmethionine:tRNA ribosyltransferase-isomerase (344 aa).

It belongs to the QueA family. Monomer.

The protein resides in the cytoplasm. The catalysed reaction is 7-aminomethyl-7-carbaguanosine(34) in tRNA + S-adenosyl-L-methionine = epoxyqueuosine(34) in tRNA + adenine + L-methionine + 2 H(+). It functions in the pathway tRNA modification; tRNA-queuosine biosynthesis. In terms of biological role, transfers and isomerizes the ribose moiety from AdoMet to the 7-aminomethyl group of 7-deazaguanine (preQ1-tRNA) to give epoxyqueuosine (oQ-tRNA). In Heliobacterium modesticaldum (strain ATCC 51547 / Ice1), this protein is S-adenosylmethionine:tRNA ribosyltransferase-isomerase.